A 476-amino-acid polypeptide reads, in one-letter code: Cysteine--tRNA ligase (476 aa).

Cys27 is a Zn(2+) binding site. Positions 29 to 39 (ITPYDSVHVGH) match the 'HIGH' region motif. Cys213, His238, and Glu242 together coordinate Zn(2+). Positions 271 to 275 (KMSKS) match the 'KMSKS' region motif. An ATP-binding site is contributed by Lys274.

The protein belongs to the class-I aminoacyl-tRNA synthetase family. Requires Zn(2+) as cofactor.

The protein localises to the cytoplasm. It carries out the reaction tRNA(Cys) + L-cysteine + ATP = L-cysteinyl-tRNA(Cys) + AMP + diphosphate. This Pyrobaculum arsenaticum (strain DSM 13514 / JCM 11321 / PZ6) protein is Cysteine--tRNA ligase.